We begin with the raw amino-acid sequence, 396 residues long: Elongation factor Tu (396 aa).

In terms of domain architecture, tr-type G spans lysine 10–glutamate 205. Residues glycine 19–threonine 26 form a G1 region. Glycine 19–threonine 26 provides a ligand contact to GTP. Threonine 26 contacts Mg(2+). The G2 stretch occupies residues glycine 61–serine 65. A G3 region spans residues aspartate 82 to glycine 85. GTP-binding positions include aspartate 82–histidine 86 and asparagine 137–aspartate 140. The interval asparagine 137–aspartate 140 is G4. Residues serine 175–leucine 177 form a G5 region.

It belongs to the TRAFAC class translation factor GTPase superfamily. Classic translation factor GTPase family. EF-Tu/EF-1A subfamily. In terms of assembly, monomer.

The protein localises to the cytoplasm. The catalysed reaction is GTP + H2O = GDP + phosphate + H(+). GTP hydrolase that promotes the GTP-dependent binding of aminoacyl-tRNA to the A-site of ribosomes during protein biosynthesis. The polypeptide is Elongation factor Tu (Shouchella clausii (strain KSM-K16) (Alkalihalobacillus clausii)).